The following is a 598-amino-acid chain: NADH-quinone oxidoreductase subunit C/D (598 aa).

The segment at 1 to 188 is NADH dehydrogenase I subunit C; the sequence is MTDSTTHDAL…DPFVLTKQKE (188 aa). The tract at residues 212-598 is NADH dehydrogenase I subunit D; the sequence is DFMFLNLGPN…IDFVMSDVDR (387 aa).

The protein in the N-terminal section; belongs to the complex I 30 kDa subunit family. In the C-terminal section; belongs to the complex I 49 kDa subunit family. In terms of assembly, NDH-1 is composed of 13 different subunits. Subunits NuoB, CD, E, F, and G constitute the peripheral sector of the complex.

The protein localises to the cell inner membrane. It catalyses the reaction a quinone + NADH + 5 H(+)(in) = a quinol + NAD(+) + 4 H(+)(out). NDH-1 shuttles electrons from NADH, via FMN and iron-sulfur (Fe-S) centers, to quinones in the respiratory chain. The immediate electron acceptor for the enzyme in this species is believed to be ubiquinone. Couples the redox reaction to proton translocation (for every two electrons transferred, four hydrogen ions are translocated across the cytoplasmic membrane), and thus conserves the redox energy in a proton gradient. This Serratia proteamaculans (strain 568) protein is NADH-quinone oxidoreductase subunit C/D.